The primary structure comprises 129 residues: MSMFRTLQRQPRTISLFTHDLENSRPCLSILEYLKSHTTNRFDLELSTKFPTLDQVHYMNAINPMILRAQIPHLTKIMKLKSYDPLFGSQLSDCVTKGFWNKEAPLWVDWEKKALGTDLQSIKELLEKD.

The N-terminal 21 residues, 1–21, are a transit peptide targeting the mitochondrion; that stretch reads MSMFRTLQRQPRTISLFTHDL. Cysteine 94 is an active-site residue.

Belongs to the FMP46 family.

The protein resides in the mitochondrion. Functionally, putative mitochondrial redox protein which could be involved in the reduction of small toxic molecules. This chain is Putative redox protein FMP46, mitochondrial (FMP46), found in Candida glabrata (strain ATCC 2001 / BCRC 20586 / JCM 3761 / NBRC 0622 / NRRL Y-65 / CBS 138) (Yeast).